The primary structure comprises 353 residues: Aromatic amino acid aminotransferase (353 aa).

K217 is subject to N6-(pyridoxal phosphate)lysine.

The protein belongs to the class-II pyridoxal-phosphate-dependent aminotransferase family. In terms of assembly, homodimer. Pyridoxal 5'-phosphate serves as cofactor.

It carries out the reaction an aromatic L-alpha-amino acid + 2-oxoglutarate = an aromatic oxo-acid + L-glutamate. Aminotransferase that catalyzes the conversion of aromatic amino acids and 2-oxoglutarate into corresponding aromatic oxo acids and L-glutamate. The protein is Aromatic amino acid aminotransferase of Mycobacterium tuberculosis (strain ATCC 25177 / H37Ra).